The primary structure comprises 1701 residues: Coiled-coil domain-containing protein 180 (1701 aa).

Residues 1–35 (MRGGENRPPARVQSSSEELELRHQSLDAFPGRRLP) form a disordered region. The stretch at 171–198 (QRQAEHKRKSYESALASFQEEIAQVGKE) forms a coiled coil. 3 disordered regions span residues 657–808 (EKPS…DKEE), 1272–1291 (HHCD…CGSR), and 1319–1354 (GFKR…KPNK). A compositionally biased stretch (basic residues) spans 661–671 (QKRVKKLRKKQ). The span at 672–682 (GSKEDMTRSEE) shows a compositional bias: basic and acidic residues. Polar residues predominate over residues 683 to 692 (SISSGTSTAR). Positions 696–705 (EVEEENDQEM) are enriched in acidic residues. Residues 755 to 766 (ENVKGQGEKKEE) are compositionally biased toward basic and acidic residues. The stretch at 757–804 (VKGQGEKKEESEEEDEKEEEEEEEKLEEEKEEKEAQEEQESLSVGEEE) forms a coiled coil. The segment covering 767 to 808 (SEEEDEKEEEEEEEKLEEEKEEKEAQEEQESLSVGEEEDKEE) has biased composition (acidic residues).

The protein is Coiled-coil domain-containing protein 180 (CCDC180) of Homo sapiens (Human).